The sequence spans 601 residues: Elongation factor 4 (601 aa).

The tr-type G domain maps to 7–189 (KNIRNFSIVA…AIVTRLPPPM (183 aa)). Residues 19-24 (DHGKST) and 136-139 (NKVD) each bind GTP.

This sequence belongs to the TRAFAC class translation factor GTPase superfamily. Classic translation factor GTPase family. LepA subfamily.

The protein localises to the cell inner membrane. The enzyme catalyses GTP + H2O = GDP + phosphate + H(+). Its function is as follows. Required for accurate and efficient protein synthesis under certain stress conditions. May act as a fidelity factor of the translation reaction, by catalyzing a one-codon backward translocation of tRNAs on improperly translocated ribosomes. Back-translocation proceeds from a post-translocation (POST) complex to a pre-translocation (PRE) complex, thus giving elongation factor G a second chance to translocate the tRNAs correctly. Binds to ribosomes in a GTP-dependent manner. The sequence is that of Elongation factor 4 from Xanthobacter autotrophicus (strain ATCC BAA-1158 / Py2).